A 130-amino-acid polypeptide reads, in one-letter code: MVRQSVLADCLNNIVNAERRGRRQVLIRPSSKVIVKFLTVMQKHGYIDEFTEIDDHRSGKIVIQLNGRINKCGVISPRFNVKLKDIEKWVNQLLPSRQVGVIVLTTSRGIMSHNEARAKDAGGKILGFFY.

It belongs to the universal ribosomal protein uS8 family. In terms of assembly, component of the small ribosomal subunit (SSU). Mature yeast ribosomes consist of a small (40S) and a large (60S) subunit. The 40S small subunit contains 1 molecule of ribosomal RNA (18S rRNA) and at least 33 different proteins. The large 60S subunit contains 3 rRNA molecules (25S, 5.8S and 5S rRNA) and at least 46 different proteins.

The protein localises to the cytoplasm. It is found in the nucleus. Component of the ribosome, a large ribonucleoprotein complex responsible for the synthesis of proteins in the cell. The small ribosomal subunit (SSU) binds messenger RNAs (mRNAs) and translates the encoded message by selecting cognate aminoacyl-transfer RNA (tRNA) molecules. The large subunit (LSU) contains the ribosomal catalytic site termed the peptidyl transferase center (PTC), which catalyzes the formation of peptide bonds, thereby polymerizing the amino acids delivered by tRNAs into a polypeptide chain. The nascent polypeptides leave the ribosome through a tunnel in the LSU and interact with protein factors that function in enzymatic processing, targeting, and the membrane insertion of nascent chains at the exit of the ribosomal tunnel. This Schizosaccharomyces pombe (strain 972 / ATCC 24843) (Fission yeast) protein is Small ribosomal subunit protein uS8A (rps2201).